A 232-amino-acid polypeptide reads, in one-letter code: tRNA1(Val) (adenine(37)-N6)-methyltransferase (232 aa).

This sequence belongs to the methyltransferase superfamily. tRNA (adenine-N(6)-)-methyltransferase family.

The protein resides in the cytoplasm. It carries out the reaction adenosine(37) in tRNA1(Val) + S-adenosyl-L-methionine = N(6)-methyladenosine(37) in tRNA1(Val) + S-adenosyl-L-homocysteine + H(+). Its function is as follows. Specifically methylates the adenine in position 37 of tRNA(1)(Val) (anticodon cmo5UAC). The polypeptide is tRNA1(Val) (adenine(37)-N6)-methyltransferase (Haemophilus influenzae (strain 86-028NP)).